Here is a 74-residue protein sequence, read N- to C-terminus: Putative membrane protein insertion efficiency factor (74 aa).

Belongs to the UPF0161 family.

Its subcellular location is the cell inner membrane. In terms of biological role, could be involved in insertion of integral membrane proteins into the membrane. This Leptospira interrogans serogroup Icterohaemorrhagiae serovar copenhageni (strain Fiocruz L1-130) protein is Putative membrane protein insertion efficiency factor.